The sequence spans 204 residues: Superoxide dismutase [Mn] (204 aa).

Position 27 (histidine 27) interacts with Mn(2+). Residues threonine 34 and threonine 70 each carry the phosphothreonine modification. Positions 82, 164, and 168 each coordinate Mn(2+).

It belongs to the iron/manganese superoxide dismutase family. In terms of assembly, homodimer. Mn(2+) serves as cofactor.

The catalysed reaction is 2 superoxide + 2 H(+) = H2O2 + O2. Destroys superoxide anion radicals which are normally produced within the cells and which are toxic to biological systems. This chain is Superoxide dismutase [Mn] (sodA), found in Bacillus caldotenax.